Consider the following 433-residue polypeptide: Peptidoglycan DD-endopeptidase ShyC (433 aa).

Residues 10 to 30 (WLHRVLITAFSAIIVFAIFFL) form a helical membrane-spanning segment. Positions 299, 303, and 380 each coordinate Zn(2+).

This sequence belongs to the peptidase M23B family. Zn(2+) is required as a cofactor.

It localises to the cell inner membrane. The protein operates within cell wall degradation; peptidoglycan degradation. Reduced activity in 0.5 mM EDTA and a complete loss of activity at higher EDTA concentrations. In terms of biological role, cell wall peptidoglycan (PG) DD-endopeptidase. Hydrolyzes peptide cross-links which covalently connect adjacent PG strands probably to allow insertion of new glycans and thus cell wall expansion. Degrades purified whole PG sacculi in vitro. This chain is Peptidoglycan DD-endopeptidase ShyC, found in Vibrio cholerae serotype O1 (strain ATCC 39315 / El Tor Inaba N16961).